The following is a 521-amino-acid chain: Myocyte-specific enhancer factor 2D (521 aa).

The region spanning Arg3–Tyr57 is the MADS-box domain. Residues Ala58 to Glu86 constitute a DNA-binding region (mef2-type). 3 positions are modified to phosphoserine: Ser98, Ser106, and Ser110. Position 121 is a phosphoserine; by PKA (Ser121). The segment at Thr174–Gly207 is disordered. A Phosphoserine; by MAPK7 modification is found at Ser180. Positions Ser180–Ser192 are enriched in polar residues. At Ser190 the chain carries Phosphoserine; by PKA. Position 231 is a phosphoserine (Ser231). The tract at residues Asn244 to Arg266 is disordered. The residue at position 245 (Lys245) is an N6-acetyllysine. A Phosphoserine modification is found at Ser251. The beta domain stretch occupies residues Thr286–Leu292. Disordered stretches follow at residues Ser357–Leu407 and Ser437–Lys521. Residues Pro373–Pro400 show a composition bias toward pro residues. Residue Lys439 is modified to N6-acetyllysine; alternate. Lys439 is covalently cross-linked (Glycyl lysine isopeptide (Lys-Gly) (interchain with G-Cter in SUMO); alternate). Position 444 is a phosphoserine (Ser444).

The protein belongs to the MEF2 family. As to quaternary structure, interacts with MYOG. Forms a complex with class II HDACs in undifferentiating cells. On myogenic differentiation, HDACs are released into the cytoplasm allowing MEF2s to interact with other proteins for activation. Interacts with HDAC4 (in undifferentiating cells); the interaction translocates MEF2D to nuclear dots. Forms a heterodimer with MEF2A. Interacts with MAPK7; the interaction phosphorylates but does not activate MEF2D. Interacts with CCAR2 and HDAC3. Phosphorylated on Ser-444 by CDK5 is required for Lys-439 sumoylation and inhibits transcriptional activity. In neurons, enhanced CDK5 activity induced by neurotoxins promotes caspase 3-mediated cleavage leading to neuron apoptosis. Phosphorylation on Ser-180 can be enhanced by EGF. Phosphorylated and activated by CaMK4. In terms of processing, acetylated on Lys-439 by CREBBP. Acetylated by EP300. Deacetylated by SIRT1 and HDAC3. Post-translationally, sumoylated on Lys-439 with SUMO2 but not SUMO1; which inhibits transcriptional activity and myogenic activity. Desumoylated by SENP3. Proteolytically cleaved in cerebellar granule neurons on several sites by caspase 7 following neurotoxicity. Preferentially cleaves the CDK5-mediated hyperphosphorylated form which leads to neuron apoptosis and transcriptional inactivation.

It is found in the nucleus. In terms of biological role, transcriptional activator which binds specifically to the MEF2 element, 5'-YTA[AT](4)TAR-3', found in numerous muscle-specific, growth factor- and stress-induced genes. Mediates cellular functions not only in skeletal and cardiac muscle development, but also in neuronal differentiation and survival. Plays diverse roles in the control of cell growth, survival and apoptosis via p38 MAPK signaling in muscle-specific and/or growth factor-related transcription. Plays a critical role in the regulation of neuronal apoptosis. This is Myocyte-specific enhancer factor 2D (MEF2D) from Homo sapiens (Human).